A 386-amino-acid polypeptide reads, in one-letter code: Acetate kinase (386 aa).

Residue N7 coordinates Mg(2+). Position 14 (K14) interacts with ATP. A substrate-binding site is contributed by R78. D135 serves as the catalytic Proton donor/acceptor. Residues 195-199 (HLGNG), 268-270 (DMR), and 316-320 (GIGEN) each bind ATP. A Mg(2+)-binding site is contributed by E370.

This sequence belongs to the acetokinase family. In terms of assembly, homodimer. It depends on Mg(2+) as a cofactor. Mn(2+) is required as a cofactor.

Its subcellular location is the cytoplasm. The catalysed reaction is acetate + ATP = acetyl phosphate + ADP. It functions in the pathway metabolic intermediate biosynthesis; acetyl-CoA biosynthesis; acetyl-CoA from acetate: step 1/2. In terms of biological role, catalyzes the formation of acetyl phosphate from acetate and ATP. Can also catalyze the reverse reaction. The polypeptide is Acetate kinase (Arthrobacter sp. (strain FB24)).